We begin with the raw amino-acid sequence, 246 residues long: DNA polymerase sliding clamp (246 aa).

Belongs to the PCNA family. In terms of assembly, homotrimer. The subunits circularize to form a toroid; DNA passes through its center. Replication factor C (RFC) is required to load the toroid on the DNA.

Sliding clamp subunit that acts as a moving platform for DNA processing. Responsible for tethering the catalytic subunit of DNA polymerase and other proteins to DNA during high-speed replication. This Thermoplasma volcanium (strain ATCC 51530 / DSM 4299 / JCM 9571 / NBRC 15438 / GSS1) protein is DNA polymerase sliding clamp.